The primary structure comprises 299 residues: MCVRVPATSANLGPGFDCLGVALDLANEFEFCEADRFRCVVHSTVSPEDARQVATDERNLAWRAFTHLFEHLGKTPPTVALTVMMHVPLGRGLGSSATAIVGGIAAANRWLGSPLSTPEWLLLASRLEGHPDNVVPAALGGCQLSILGETLLTCALDWHPQIALVLAVPDFALATSKARAALPKTVPHTDAVFNAVHLALLVRALATGDARWLAEALQDRLHQPYRTGLIPGWQDVRAAALEAGAWGVVISGAGPSVLALTHLDCAEAVRQAMASTWPNACLYCPGLDPNGCRVEVEAG.

Residue 88-98 coordinates ATP; it reads PLGRGLGSSAT.

It belongs to the GHMP kinase family. Homoserine kinase subfamily.

Its subcellular location is the cytoplasm. The catalysed reaction is L-homoserine + ATP = O-phospho-L-homoserine + ADP + H(+). The protein operates within amino-acid biosynthesis; L-threonine biosynthesis; L-threonine from L-aspartate: step 4/5. In terms of biological role, catalyzes the ATP-dependent phosphorylation of L-homoserine to L-homoserine phosphate. This chain is Homoserine kinase, found in Gloeobacter violaceus (strain ATCC 29082 / PCC 7421).